We begin with the raw amino-acid sequence, 340 residues long: Flavonoid 7-O-methyltransferase 2 (340 aa).

Asp207 is a binding site for S-adenosyl-L-methionine. The active-site Proton acceptor is the His245.

It belongs to the class I-like SAM-binding methyltransferase superfamily. Cation-independent O-methyltransferase family. Homodimer. Expressed in leaves.

It catalyses the reaction scutellarein 4'-methyl ether + S-adenosyl-L-methionine = ladanein + S-adenosyl-L-homocysteine. The enzyme catalyses acacetin + S-adenosyl-L-methionine = apigenin 4',7-dimethyl ether + S-adenosyl-L-homocysteine. The catalysed reaction is diosmetin + S-adenosyl-L-methionine = luteolin 4',7-dimethyl ether + S-adenosyl-L-homocysteine. It carries out the reaction chrysoeriol + S-adenosyl-L-methionine = velutin + S-adenosyl-L-homocysteine. It catalyses the reaction (2S)-naringenin + S-adenosyl-L-methionine = (2S)-sakuranetin + S-adenosyl-L-homocysteine + H(+). The enzyme catalyses apigenin + S-adenosyl-L-methionine = genkwanin + S-adenosyl-L-homocysteine + H(+). The catalysed reaction is luteolin + S-adenosyl-L-methionine = luteolin 7-methyl ether + S-adenosyl-L-homocysteine + H(+). It carries out the reaction scutellarein + S-adenosyl-L-methionine = scutellarein 7-methyl ether + S-adenosyl-L-homocysteine. Its pathway is flavonoid metabolism. Flavonoid 7-O-methyltransferase involved in the biosynthesis of polymethoxylated flavonoids natural products such as nevadensin and salvigenin, aroma compounds which contribute to the flavor of sweet basil, and exhibit pharmacological activities such as anti-allergic, anti-oxidant, antibacterial, anti-proliferative, and anti-inflammatory effects. Catalyzes S-adenosylmethionine-dependent regioselective 7-O-methylation of flavonoids; active on various hydroxylated flavonoid substrates, including apigenin (API) and luteolin (LUT), and, with a lower efficiency, scutellarein (SCU), naringenin (NAR), chrysoeriol (CHRYS), diosmetin (DIOS), acacetin (ACA) and scutellarein-7-methyl ether (SCU7Me). This chain is Flavonoid 7-O-methyltransferase 2, found in Ocimum basilicum (Sweet basil).